The sequence spans 184 residues: Acireductone dioxygenase 4 (184 aa).

Fe(2+)-binding residues include H86, H88, E92, and H131. Residues H86, H88, E92, and H131 each contribute to the Ni(2+) site.

It belongs to the acireductone dioxygenase (ARD) family. Requires Fe(2+) as cofactor. Ni(2+) is required as a cofactor.

It localises to the cytoplasm. The protein resides in the nucleus. It catalyses the reaction 1,2-dihydroxy-5-(methylsulfanyl)pent-1-en-3-one + O2 = 4-methylsulfanyl-2-oxobutanoate + formate + 2 H(+). The catalysed reaction is 1,2-dihydroxy-5-(methylsulfanyl)pent-1-en-3-one + O2 = 3-(methylsulfanyl)propanoate + CO + formate + 2 H(+). It participates in amino-acid biosynthesis; L-methionine biosynthesis via salvage pathway; L-methionine from S-methyl-5-thio-alpha-D-ribose 1-phosphate: step 5/6. Its function is as follows. Catalyzes 2 different reactions between oxygen and the acireductone 1,2-dihydroxy-3-keto-5-methylthiopentene (DHK-MTPene) depending upon the metal bound in the active site. Fe-containing acireductone dioxygenase (Fe-ARD) produces formate and 2-keto-4-methylthiobutyrate (KMTB), the alpha-ketoacid precursor of methionine in the methionine recycle pathway. Ni-containing acireductone dioxygenase (Ni-ARD) produces methylthiopropionate, carbon monoxide and formate, and does not lie on the methionine recycle pathway. This Oryza sativa subsp. japonica (Rice) protein is Acireductone dioxygenase 4 (ARD4).